The primary structure comprises 122 residues: Large ribosomal subunit protein uL18 (122 aa).

This sequence belongs to the universal ribosomal protein uL18 family. Part of the 50S ribosomal subunit; part of the 5S rRNA/L5/L18/L25 subcomplex. Contacts the 5S and 23S rRNAs.

In terms of biological role, this is one of the proteins that bind and probably mediate the attachment of the 5S RNA into the large ribosomal subunit, where it forms part of the central protuberance. The protein is Large ribosomal subunit protein uL18 of Lachnoclostridium phytofermentans (strain ATCC 700394 / DSM 18823 / ISDg) (Clostridium phytofermentans).